Here is a 98-residue protein sequence, read N- to C-terminus: R.appendiculatus Kunitz/BPTI-like protein (98 aa).

The N-terminal stretch at 1-23 (MASTLKLFMLLPVILLLLQEAYG) is a signal peptide. 4 disulfide bridges follow: C36–C51, C43–C83, C49–C96, and C74–C92.

In terms of assembly, monomer. In terms of tissue distribution, expressed in salivary glands.

The protein resides in the secreted. Functionally, activates large conductance calcium-activated potassium channels (maxiK, KCNMA1/KCNMB), when tested at micromolar concentrations, suggesting a potential mechanism for regulating host blood supply during feeding. Shows no antiprotease activity, and does not prevent ADP-, PAF- or collagen-induced platelet aggregation. Has no effect on blood coagulation and does not inhibit the alternative or classical complement cascades. In Rhipicephalus appendiculatus (Brown ear tick), this protein is R.appendiculatus Kunitz/BPTI-like protein.